The sequence spans 355 residues: Tryptophan--tRNA ligase (355 aa).

Residues Gln13–Thr15 and Gly21–Asn22 each bind ATP. The 'HIGH' region motif lies at Pro14–Asn22. Asp137 serves as a coordination point for L-tryptophan. Residues Gly149 to Asp151, Ile208, and Lys217 to Ser221 each bind ATP. The short motif at Lys217 to Ser221 is the 'KMSKS' region element.

It belongs to the class-I aminoacyl-tRNA synthetase family. As to quaternary structure, homodimer.

It is found in the cytoplasm. It catalyses the reaction tRNA(Trp) + L-tryptophan + ATP = L-tryptophyl-tRNA(Trp) + AMP + diphosphate + H(+). Its function is as follows. Catalyzes the attachment of tryptophan to tRNA(Trp). This chain is Tryptophan--tRNA ligase, found in Mesorhizobium japonicum (strain LMG 29417 / CECT 9101 / MAFF 303099) (Mesorhizobium loti (strain MAFF 303099)).